The primary structure comprises 307 residues: tRNA dimethylallyltransferase 1 (307 aa).

11 to 18 (GPTASGKT) lines the ATP pocket. 13-18 (TASGKT) contacts substrate. 2 interaction with substrate tRNA regions span residues 36–39 (DSRQ) and 159–163 (QRAIR).

This sequence belongs to the IPP transferase family. As to quaternary structure, monomer. Requires Mg(2+) as cofactor.

It carries out the reaction adenosine(37) in tRNA + dimethylallyl diphosphate = N(6)-dimethylallyladenosine(37) in tRNA + diphosphate. Functionally, catalyzes the transfer of a dimethylallyl group onto the adenine at position 37 in tRNAs that read codons beginning with uridine, leading to the formation of N6-(dimethylallyl)adenosine (i(6)A). In Parabacteroides distasonis (strain ATCC 8503 / DSM 20701 / CIP 104284 / JCM 5825 / NCTC 11152), this protein is tRNA dimethylallyltransferase 1.